The chain runs to 409 residues: uncharacterized protein (409 aa).

Disordered regions lie at residues 12-32 (ENTE…LHCP), 133-160 (EVST…SREQ), and 194-213 (TVSS…GLST). Residues 134 to 160 (VSTQKSWSSEKNWSGLSQGPGTASREQ) are compositionally biased toward polar residues.

This is an uncharacterized protein from Mus musculus (Mouse).